The primary structure comprises 361 residues: Queuine tRNA-ribosyltransferase (361 aa).

The active-site Proton acceptor is the D92. Residues D92–F96, D146, Q189, and G216 each bind substrate. Positions G247–D253 are RNA binding. Residue D266 is the Nucleophile of the active site. The interval T271 to R275 is RNA binding; important for wobble base 34 recognition. Positions 304, 306, 309, and 335 each coordinate Zn(2+).

This sequence belongs to the queuine tRNA-ribosyltransferase family. In terms of assembly, homodimer. Within each dimer, one monomer is responsible for RNA recognition and catalysis, while the other monomer binds to the replacement base PreQ1. Zn(2+) is required as a cofactor.

The enzyme catalyses 7-aminomethyl-7-carbaguanine + guanosine(34) in tRNA = 7-aminomethyl-7-carbaguanosine(34) in tRNA + guanine. It functions in the pathway tRNA modification; tRNA-queuosine biosynthesis. Functionally, catalyzes the base-exchange of a guanine (G) residue with the queuine precursor 7-aminomethyl-7-deazaguanine (PreQ1) at position 34 (anticodon wobble position) in tRNAs with GU(N) anticodons (tRNA-Asp, -Asn, -His and -Tyr). Catalysis occurs through a double-displacement mechanism. The nucleophile active site attacks the C1' of nucleotide 34 to detach the guanine base from the RNA, forming a covalent enzyme-RNA intermediate. The proton acceptor active site deprotonates the incoming PreQ1, allowing a nucleophilic attack on the C1' of the ribose to form the product. After dissociation, two additional enzymatic reactions on the tRNA convert PreQ1 to queuine (Q), resulting in the hypermodified nucleoside queuosine (7-(((4,5-cis-dihydroxy-2-cyclopenten-1-yl)amino)methyl)-7-deazaguanosine). The sequence is that of Queuine tRNA-ribosyltransferase from Rickettsia typhi (strain ATCC VR-144 / Wilmington).